The chain runs to 359 residues: tRNA-specific 2-thiouridylase MnmA (359 aa).

ATP-binding positions include alanine 6–serine 13 and leucine 32. The active-site Nucleophile is cysteine 101. A disulfide bridge connects residues cysteine 101 and cysteine 193. Position 125 (glycine 125) interacts with ATP. Positions lysine 143–glutamine 145 are interaction with tRNA. The active-site Cysteine persulfide intermediate is the cysteine 193.

It belongs to the MnmA/TRMU family.

Its subcellular location is the cytoplasm. The catalysed reaction is S-sulfanyl-L-cysteinyl-[protein] + uridine(34) in tRNA + AH2 + ATP = 2-thiouridine(34) in tRNA + L-cysteinyl-[protein] + A + AMP + diphosphate + H(+). Catalyzes the 2-thiolation of uridine at the wobble position (U34) of tRNA, leading to the formation of s(2)U34. The polypeptide is tRNA-specific 2-thiouridylase MnmA (Mycobacterium sp. (strain KMS)).